Here is a 415-residue protein sequence, read N- to C-terminus: Lupus La protein homolog (415 aa).

One can recognise an HTH La-type RNA-binding domain in the interval N7–E99. S92 and S94 each carry phosphoserine. The 77-residue stretch at R111–D187 folds into the RRM domain. K116 bears the N6-acetyllysine mark. Residue T120 is modified to Phosphothreonine. 3 positions are modified to N6-acetyllysine: K128, K327, and K356. The xRRM domain maps to E226–T346. A disordered region spans residues R349–K415. T377 carries the post-translational modification Phosphothreonine. Residues T377–K415 show a composition bias toward basic and acidic residues.

As to quaternary structure, interacts with DDX15. May interact with RUFY1. Post-translationally, phosphorylated.

It localises to the nucleus. Its function is as follows. Binds to the 3' poly(U) terminus of nascent RNA polymerase III transcripts, protecting them from exonuclease digestion and facilitating their folding and maturation. In Mus musculus (Mouse), this protein is Lupus La protein homolog (Ssb).